Here is a 466-residue protein sequence, read N- to C-terminus: GTP cyclohydrolase 1 (466 aa).

Zn(2+)-binding residues include Cys342, His345, and Cys416.

This sequence belongs to the GTP cyclohydrolase I family. In terms of assembly, homodimer.

It carries out the reaction GTP + H2O = 7,8-dihydroneopterin 3'-triphosphate + formate + H(+). It participates in cofactor biosynthesis; 7,8-dihydroneopterin triphosphate biosynthesis; 7,8-dihydroneopterin triphosphate from GTP: step 1/1. Its function is as follows. GTP cyclohydrolase 1 is the first enzyme in the biosynthetic pathway leading to folic acid. The polypeptide is GTP cyclohydrolase 1 (GCH1) (Arabidopsis thaliana (Mouse-ear cress)).